Consider the following 559-residue polypeptide: YTH domain-containing family protein 1 (559 aa).

Positions 1–49 (MSATSVDPQRTKGQDNKVQNGSLHQKDAVHDNDFEPYLSGQSNPSNSYP) are disordered. Ser-2 carries the post-translational modification N-acetylserine. A compositionally biased stretch (basic and acidic residues) spans 24 to 33 (HQKDAVHDND). Ser-182 carries the phosphoserine modification. Residues 239 to 365 (SKPAKPQPKM…PTSAPSVESH (127 aa)) are disordered. 2 stretches are compositionally biased toward low complexity: residues 279–305 (PAPK…AQPL) and 314–326 (QPQY…PLQP). Residues 343-361 (GANSDSNSVGNAQPTSAPS) are compositionally biased toward polar residues. Residues 389–523 (GRVFIIKSYS…EKAKQVLKII (135 aa)) enclose the YTH domain. RNA-binding positions include 395–397 (KSY), Asp-401, 411–412 (WC), Asn-441, Trp-465, and Trp-470.

This sequence belongs to the YTHDF family. YTHDF1 subfamily. In terms of assembly, interacts with CNOT1; promoting recruitment of the CCR4-NOT complex. Interacts with ribosomes. Interacts with eIF3 (EIF3A or EIF3B). Interacts with YTHDF3. Post-translationally, ubiquitinated by the CUL7-FBXW8 E3 ligase complex leading to degradation. Deubiquitinated and stabilized by USP5 by removing 'Lys-11'-linked polyubiquitination. In terms of tissue distribution, in brain, preferentially expressed in the hippocampus.

Its subcellular location is the cytoplasm. It localises to the P-body. The protein localises to the stress granule. Specifically recognizes and binds N6-methyladenosine (m6A)-containing mRNAs, and regulates their stability. M6A is a modification present at internal sites of mRNAs and some non-coding RNAs and plays a role in mRNA stability and processing. Acts as a regulator of mRNA stability by promoting degradation of m6A-containing mRNAs via interaction with the CCR4-NOT complex. The YTHDF paralogs (YTHDF1, YTHDF2 and YTHDF3) share m6A-containing mRNAs targets and act redundantly to mediate mRNA degradation and cellular differentiation. Required to facilitate learning and memory formation in the hippocampus by binding to m6A-containing neuronal mRNAs. Acts as a regulator of axon guidance by binding to m6A-containing ROBO3 transcripts. Acts as a negative regulator of antigen cross-presentation in myeloid dendritic cells. In the context of tumorigenesis, negative regulation of antigen cross-presentation limits the anti-tumor response by reducing efficiency of tumor-antigen cross-presentation. Promotes formation of phase-separated membraneless compartments, such as P-bodies or stress granules, by undergoing liquid-liquid phase separation upon binding to mRNAs containing multiple m6A-modified residues: polymethylated mRNAs act as a multivalent scaffold for the binding of YTHDF proteins, juxtaposing their disordered regions and thereby leading to phase separation. The resulting mRNA-YTHDF complexes then partition into different endogenous phase-separated membraneless compartments, such as P-bodies, stress granules or neuronal RNA granules. This Mus musculus (Mouse) protein is YTH domain-containing family protein 1.